The primary structure comprises 238 residues: Major prion protein (238 aa).

An N-terminal signal peptide occupies residues 1–15 (MLVLFVATWSDLGLC). Positions 16-215 (KKRPKPGGWN…ESQAYYQRGS (200 aa)) are interaction with GRB2, ERI3 and SYN1. Residues 18 to 93 (RPKPGGWNTG…WHKPSKPKTS (76 aa)) form a disordered region. Repeat copies occupy residues 44–52 (PQGGGGWGQ), 53–60 (PHGGGWGQ), 61–68 (PHGGGWGQ), and 69–76 (PHGGGWGQ). The 4 X 8 AA tandem repeats of P-H-G-G-G-W-G-Q stretch occupies residues 44–76 (PQGGGGWGQPHGGGWGQPHGGGWGQPHGGGWGQ). Over residues 45-80 (QGGGGWGQPHGGGWGQPHGGGWGQPHGGGWGQGGGT) the composition is skewed to gly residues. The Cu(2+) site is built by Gly-47, Gly-48, His-54, Gly-55, Gly-56, His-62, Gly-63, Gly-64, His-70, Gly-71, and Gly-72. Residues 83 to 93 (QWHKPSKPKTS) are compositionally biased toward basic residues. An intrachain disulfide couples Cys-164 to Cys-199. N-linked (GlcNAc...) asparagine glycans are attached at residues Asn-166 and Asn-182. Ser-215 is lipidated: GPI-anchor amidated serine. Residues 216–238 (SMVLFSSPPVILLISFLIFLIVG) constitute a propeptide, removed in mature form.

This sequence belongs to the prion family. In terms of assembly, monomer and homodimer. Has a tendency to aggregate into amyloid fibrils containing a cross-beta spine, formed by a steric zipper of superposed beta-strands. Soluble oligomers may represent an intermediate stage on the path to fibril formation. Copper binding may promote oligomerization. Interacts with GRB2, APP, ERI3/PRNPIP and SYN1. Mislocalized cytosolically exposed PrP interacts with MGRN1; this interaction alters MGRN1 subcellular location and causes lysosomal enlargement. Interacts with KIAA1191.

It localises to the cell membrane. It is found in the golgi apparatus. Functionally, its primary physiological function is unclear. Has cytoprotective activity against internal or environmental stresses. May play a role in neuronal development and synaptic plasticity. May be required for neuronal myelin sheath maintenance. May play a role in iron uptake and iron homeostasis. Soluble oligomers are toxic to cultured neuroblastoma cells and induce apoptosis (in vitro). Association with GPC1 (via its heparan sulfate chains) targets PRNP to lipid rafts. Also provides Cu(2+) or Zn(2+) for the ascorbate-mediated GPC1 deaminase degradation of its heparan sulfate side chains. The chain is Major prion protein (PRNP) from Macaca sylvanus (Barbary macaque).